The following is a 228-amino-acid chain: MGEELSVGFRFYPTEVELLTYYLRIQLGGGNATIHSLIPILDVFSVEPTQLPNLAGERCRGDAEQWIFFVPRQEREARGGRPSRTTGSGYWKATGSPGPVFSPDNRVIGVKKTMVFYTGKAPTGRKTKWKMNEYKAVETASVSTIPKSGSSRAFDRRPTEAYAIERNLPSNGVETSSRATISTSPETSHSGGNQVDLPVNATTITQSISDMVDELSQPFWEWEQMNWS.

The 152-residue stretch at 5–156 (LSVGFRFYPT…KSGSSRAFDR (152 aa)) folds into the NAC domain. 2 disordered regions span residues 77–96 (ARGGRPSRTTGSGYWKATGS) and 166–197 (RNLPSNGVETSSRATISTSPETSHSGGNQVDL). The segment covering 80-89 (GRPSRTTGSG) has biased composition (low complexity). The segment covering 168 to 193 (LPSNGVETSSRATISTSPETSHSGGN) has biased composition (polar residues).

It is found in the nucleus. In Arabidopsis thaliana (Mouse-ear cress), this protein is Putative NAC domain-containing protein 61 (NAC061).